We begin with the raw amino-acid sequence, 860 residues long: DNA mismatch repair protein MutS (860 aa).

621–628 (GPNMGGKS) is a binding site for ATP.

The protein belongs to the DNA mismatch repair MutS family.

This protein is involved in the repair of mismatches in DNA. It is possible that it carries out the mismatch recognition step. This protein has a weak ATPase activity. The sequence is that of DNA mismatch repair protein MutS from Salmonella arizonae (strain ATCC BAA-731 / CDC346-86 / RSK2980).